We begin with the raw amino-acid sequence, 248 residues long: Peroxisomal membrane protein 11A (248 aa).

Topologically, residues 1–97 are cytoplasmic; it reads MATKAPEKIT…RSSRWDSNHE (97 aa). The helical transmembrane segment at 98–118 threads the bilayer; it reads LVLLIIAYGGEGLYYFVEQFI. Over 119–220 the chain is Lumenal; the sequence is WLTKSGLIDA…MTIADIRDGK (102 aa). The chain crosses the membrane as a helical span at residues 221–241; that stretch reads GVLSAPNVISSAGLFSAIVST. The Cytoplasmic segment spans residues 242 to 248; sequence HKNWISC.

The protein belongs to the peroxin-11 family. Homooligomer. Interacts with ARC5 and FIS1B on peroxisomes. In terms of tissue distribution, expressed in developing siliques.

Its subcellular location is the peroxisome membrane. Involved in peroxisomal proliferation. Promotes peroxisomal duplication, aggregation or elongation without fission. This chain is Peroxisomal membrane protein 11A (PEX11A), found in Arabidopsis thaliana (Mouse-ear cress).